The following is a 291-amino-acid chain: MIRYPAVAGQFYPEGETLVEMLEEFFRDLGEQGNSRKITAGVAPHAGYVFSGYTASRTYKAIYEDGLPETFVIFGPNHTGLGSPIAVYPEGDWVTPLGKVKIDSELAKEIVKLSKIADLDDLAHKYEHSIEVQLPFIQYIAEKAGTDFRIVPITLGIQDEDVSEALGRAVFEAAEALGRDVIVIASTDFMHYGSFYGYVPFRGRANELPNMVKEWDMRIIRRILDFDLKGMFEEIREMDHTMCGPGGVGAGIVYSRLMNAREAELLHYTTSFEVSRSTDAIVGYASIVMRR.

Belongs to the MEMO1 family.

The chain is MEMO1 family protein PYRAB05390 from Pyrococcus abyssi (strain GE5 / Orsay).